The following is a 374-amino-acid chain: Palmitoyltransferase PFA5 (374 aa).

Residues 1 to 13 (MALSWNIRIRRRS) are Cytoplasmic-facing. Residues 14-34 (WFRFILPIIVLGLLCYGTWAY) traverse the membrane as a helical segment. Residues 35-55 (CHKLCYEQVDKRLRQKSVSVG) lie on the Lumenal side of the membrane. The helical transmembrane segment at 56–76 (LICAVCFLDVVVIFIWLQIVI) threads the bilayer. The Cytoplasmic segment spans residues 77–173 (LVGPGTQPHV…TVIGRDNYRL (97 aa)). Positions 129 to 179 (IWCSECQSLKMERTHHSSELGHCIPRFDHYCMWIGTVIGRDNYRLFVQFAA) constitute a DHHC domain. The helical transmembrane segment at 174–194 (FVQFAAYFSTLLLIMWVSICV) threads the bilayer. Topologically, residues 195–217 (YIRIITQHNHNYSPNLNANIIST) are lumenal. Residues 218-238 (LVFAILGWLLTASLLASSIFY) form a helical membrane-spanning segment. Topologically, residues 239-374 (MSQNKTSLEA…ASGDDSDPAY (136 aa)) are cytoplasmic.

This sequence belongs to the DHHC palmitoyltransferase family. PFA5 subfamily. Autopalmitoylated.

It is found in the membrane. The enzyme catalyses L-cysteinyl-[protein] + hexadecanoyl-CoA = S-hexadecanoyl-L-cysteinyl-[protein] + CoA. The chain is Palmitoyltransferase PFA5 (PFA5) from Saccharomyces cerevisiae (strain ATCC 204508 / S288c) (Baker's yeast).